The following is an 869-amino-acid chain: Bifunctional uridylyltransferase/uridylyl-removing enzyme (869 aa).

Residues 1–332 (MTDTPAERPD…QFDGEATPEP (332 aa)) form a uridylyltransferase region. Positions 333–691 (LGGGFSLRRG…RRAVPDNDAL (359 aa)) are uridylyl-removing. In terms of domain architecture, HD spans 450–572 (VDQHTLMVLR…VGTRERLDYL (123 aa)). ACT domains follow at residues 692 to 774 (EVFV…RAVP) and 798 to 869 (RISL…LDPV).

The protein belongs to the GlnD family. Requires Mg(2+) as cofactor.

It catalyses the reaction [protein-PII]-L-tyrosine + UTP = [protein-PII]-uridylyl-L-tyrosine + diphosphate. The enzyme catalyses [protein-PII]-uridylyl-L-tyrosine + H2O = [protein-PII]-L-tyrosine + UMP + H(+). Uridylyltransferase (UTase) activity is inhibited by glutamine, while glutamine activates uridylyl-removing (UR) activity. In terms of biological role, modifies, by uridylylation and deuridylylation, the PII regulatory proteins (GlnB and homologs), in response to the nitrogen status of the cell that GlnD senses through the glutamine level. Under low glutamine levels, catalyzes the conversion of the PII proteins and UTP to PII-UMP and PPi, while under higher glutamine levels, GlnD hydrolyzes PII-UMP to PII and UMP (deuridylylation). Thus, controls uridylylation state and activity of the PII proteins, and plays an important role in the regulation of nitrogen assimilation and metabolism. The chain is Bifunctional uridylyltransferase/uridylyl-removing enzyme from Xanthomonas axonopodis pv. citri (strain 306).